The following is a 257-amino-acid chain: 3-methyl-2-oxobutanoate hydroxymethyltransferase (257 aa).

Residues D42 and D86 each contribute to the Mg(2+) site. 3-methyl-2-oxobutanoate-binding positions include D42 to S43, D86, and K116. E118 is a binding site for Mg(2+). The active-site Proton acceptor is the E185.

The protein belongs to the PanB family. Homodecamer; pentamer of dimers. Mg(2+) is required as a cofactor.

The protein localises to the cytoplasm. The enzyme catalyses 3-methyl-2-oxobutanoate + (6R)-5,10-methylene-5,6,7,8-tetrahydrofolate + H2O = 2-dehydropantoate + (6S)-5,6,7,8-tetrahydrofolate. It functions in the pathway cofactor biosynthesis; (R)-pantothenate biosynthesis; (R)-pantoate from 3-methyl-2-oxobutanoate: step 1/2. In terms of biological role, catalyzes the reversible reaction in which hydroxymethyl group from 5,10-methylenetetrahydrofolate is transferred onto alpha-ketoisovalerate to form ketopantoate. The sequence is that of 3-methyl-2-oxobutanoate hydroxymethyltransferase from Prochlorococcus marinus (strain MIT 9215).